Here is a 188-residue protein sequence, read N- to C-terminus: dCTP deaminase (188 aa).

Residues 111–116, 135–137, Q156, Y170, and Q180 each bind dCTP; these read KSTYAR and TLE. E137 serves as the catalytic Proton donor/acceptor.

This sequence belongs to the dCTP deaminase family. In terms of assembly, homotrimer.

It carries out the reaction dCTP + H2O + H(+) = dUTP + NH4(+). Its pathway is pyrimidine metabolism; dUMP biosynthesis; dUMP from dCTP (dUTP route): step 1/2. Catalyzes the deamination of dCTP to dUTP. This Pseudomonas fluorescens (strain SBW25) protein is dCTP deaminase.